The following is a 78-amino-acid chain: Small nuclear ribonucleoprotein F (78 aa).

Positions asparagine 7 to valine 78 constitute a Sm domain.

This sequence belongs to the snRNP Sm proteins family. SmF/LSm6 subfamily. In terms of assembly, belongs to the 40S cdc5-associated complex (or cwf complex), a spliceosome sub-complex reminiscent of a late-stage spliceosome composed of the U2, U5 and U6 snRNAs and at least brr2, cdc5, cwf2/prp3, cwf3/syf1, cwf4/syf3, cwf5/ecm2, spp42/cwf6, cwf7/spf27, cwf8, cwf9, cwf10, cwf11, cwf12, prp45/cwf13, cwf14, cwf15, cwf16, cwf17, cwf18, cwf19, cwf20, cwf21, cwf22, cwf23, cwf24, cwf25, cwf26, cyp7/cwf27, cwf28, cwf29/ist3, lea1, msl1, prp5/cwf1, prp10, prp12/sap130, prp17, prp22, sap61, sap62, sap114, sap145, slu7, smb1, smd1, smd3, smf1, smg1 and syf2.

Its subcellular location is the nucleus. The protein resides in the cytoplasm. In terms of biological role, plays a role in pre-mRNA splicing as a core component of the spliceosomal U1, U2, U4 and U5 small nuclear ribonucleoproteins (snRNPs), the building blocks of the spliceosome. The sequence is that of Small nuclear ribonucleoprotein F (smf1) from Schizosaccharomyces pombe (strain 972 / ATCC 24843) (Fission yeast).